Here is a 182-residue protein sequence, read N- to C-terminus: UPF0398 protein lwe1908 (182 aa).

Belongs to the UPF0398 family.

This Listeria welshimeri serovar 6b (strain ATCC 35897 / DSM 20650 / CCUG 15529 / CIP 8149 / NCTC 11857 / SLCC 5334 / V8) protein is UPF0398 protein lwe1908.